A 147-amino-acid chain; its full sequence is Large ribosomal subunit protein uL11 (147 aa).

This sequence belongs to the universal ribosomal protein uL11 family. In terms of assembly, part of the ribosomal stalk of the 50S ribosomal subunit. Interacts with L10 and the large rRNA to form the base of the stalk. L10 forms an elongated spine to which L12 dimers bind in a sequential fashion forming a multimeric L10(L12)X complex. Post-translationally, one or more lysine residues are methylated.

In terms of biological role, forms part of the ribosomal stalk which helps the ribosome interact with GTP-bound translation factors. The sequence is that of Large ribosomal subunit protein uL11 from Metamycoplasma arthritidis (strain 158L3-1) (Mycoplasma arthritidis).